A 233-amino-acid chain; its full sequence is Nucleoside diphosphate kinase 2, chloroplastic (233 aa).

The N-terminal 67 residues, 1–67, are a transit peptide targeting the chloroplast; that stretch reads MEAMSGLSSP…LISHSLPRKK (67 aa). Residues Lys93, Phe141, Arg169, Thr175, Arg186, and Asn196 each coordinate ATP. Residue His199 is the Pros-phosphohistidine intermediate of the active site.

Belongs to the NDK family. Requires Mg(2+) as cofactor.

Its subcellular location is the plastid. It localises to the chloroplast. It catalyses the reaction a 2'-deoxyribonucleoside 5'-diphosphate + ATP = a 2'-deoxyribonucleoside 5'-triphosphate + ADP. The catalysed reaction is a ribonucleoside 5'-diphosphate + ATP = a ribonucleoside 5'-triphosphate + ADP. Functionally, major role in the synthesis of nucleoside triphosphates other than ATP. The ATP gamma phosphate is transferred to the NDP beta phosphate via a ping-pong mechanism, using a phosphorylated active-site intermediate. The sequence is that of Nucleoside diphosphate kinase 2, chloroplastic (NDPK2) from Spinacia oleracea (Spinach).